The sequence spans 721 residues: Centlein (721 aa).

The stretch at 52–164 (KNEKAISEQT…LRDENEEVVN (113 aa)) forms a coiled coil. Disordered regions lie at residues 156-180 (RDENEEVVNPEEKEHCPTDKAKSEM) and 259-288 (ETSQNIRPIENDGNQKETDQTEDSRAQQEV). Basic and acidic residues-rich tracts occupy residues 165–178 (PEEKEHCPTDKAKS) and 267–284 (IENDGNQKETDQTEDSRA). Coiled coils occupy residues 345–515 (LLRE…EDLK) and 573–626 (QSEQ…TQKS). At threonine 658 the chain carries Phosphothreonine.

In terms of assembly, interacts with CEP250 and CEP68. Interacts with NEK2; the interaction leads to phosphorylation of CNTLN. Post-translationally, phosphorylated directly or indirectly by NEK2.

The protein resides in the cytoplasm. It localises to the cytoskeleton. It is found in the microtubule organizing center. Its subcellular location is the centrosome. The protein localises to the centriole. Required for centrosome cohesion and recruitment of CEP68 to centrosomes. This is Centlein from Rattus norvegicus (Rat).